Reading from the N-terminus, the 400-residue chain is MTTLGTPLSPSATRVLLLGSGELGKEVAIELQRFGVEVIAADRYANAPAMQVAHRSHVLDMLDPQALRALIAQEQPHLIVPEIEAIHTETLVALEHEQGQKVIPTARAARLTMDREGIRRLAAETLGLPTSPYRFVDTAAEYREAIATVGLPCVVKPVMSSSGKGQSTLRSEADIDAAWDYAQTGGRAGAGRCIVEGFIDFDYEITLLTVRHAGGTSFCDPIGHWQKDGDYRESWQPQPMSAAALRRSQEIAQAITDELGGWGLFGVELFVKGDEVWFSEVSPRPHDTGLVTLVSQELSEFALHARAILGLPVGAENGGVIRQSGPSASCALLAHGNGVPVFDNVAEALRDPDTALRLFGKPRVDGHRRVGVTLARAGSIDAAREKARVAAAALTIQLRD.

Residues 22 to 23 and Glu82 contribute to the N(1)-(5-phospho-beta-D-ribosyl)glycinamide site; that span reads EL. Residues Arg115, Lys156, 161–166, 196–199, and Glu204 each bind ATP; these read SSGKGQ and EGFI. Residues 120–309 enclose the ATP-grasp domain; the sequence is RLAAETLGLP…EFALHARAIL (190 aa). Mg(2+)-binding residues include Glu268 and Glu280. N(1)-(5-phospho-beta-D-ribosyl)glycinamide-binding positions include Asp287, Lys361, and 368-369; that span reads RR.

The protein belongs to the PurK/PurT family. Homodimer.

It carries out the reaction N(1)-(5-phospho-beta-D-ribosyl)glycinamide + formate + ATP = N(2)-formyl-N(1)-(5-phospho-beta-D-ribosyl)glycinamide + ADP + phosphate + H(+). Its pathway is purine metabolism; IMP biosynthesis via de novo pathway; N(2)-formyl-N(1)-(5-phospho-D-ribosyl)glycinamide from N(1)-(5-phospho-D-ribosyl)glycinamide (formate route): step 1/1. In terms of biological role, involved in the de novo purine biosynthesis. Catalyzes the transfer of formate to 5-phospho-ribosyl-glycinamide (GAR), producing 5-phospho-ribosyl-N-formylglycinamide (FGAR). Formate is provided by PurU via hydrolysis of 10-formyl-tetrahydrofolate. This chain is Formate-dependent phosphoribosylglycinamide formyltransferase, found in Xanthomonas campestris pv. campestris (strain 8004).